Reading from the N-terminus, the 347-residue chain is Globoside alpha-1,3-N-acetylgalactosaminyltransferase 1 (347 aa).

The Cytoplasmic portion of the chain corresponds to 1 to 6 (MTRPRL). Residues 7-27 (AQGLAFFLLGGTGLWVLWKFI) form a helical; Signal-anchor for type II membrane protein membrane-spanning segment. Residues 28-347 (KDWLLVSYIP…VKKNANWLRT (320 aa)) are Lumenal-facing. An N-linked (GlcNAc...) asparagine glycan is attached at Asn-108. Substrate contacts are provided by residues 116–121 (FAVGKY), 206–208 (DVD), and 228–231 (HPGY). Residues Asp-206 and Asp-208 each coordinate Mn(2+). The active-site Nucleophile is Glu-298.

This sequence belongs to the glycosyltransferase 6 family. The cofactor is Mn(2+).

The protein resides in the golgi apparatus membrane. The catalysed reaction is a globoside Gb4Cer (d18:1(4E)) + UDP-N-acetyl-alpha-D-galactosamine = a globoside Forssman (d18:1(4E)) + UDP + H(+). The enzyme catalyses a globoside Gb4Cer + UDP-N-acetyl-alpha-D-galactosamine = a globoside IV3GalNAc-Gb4Cer + UDP + H(+). It participates in protein modification; protein glycosylation. Functionally, catalyzes the formation of Forssman glycolipid via the addition of N-acetylgalactosamine (GalNAc) in alpha-1,3-linkage to GalNAcb-1,3Gala-1,4Galb-1,4GlcCer (Gb4Cer). Forssman glycolipid (also called Forssman antigen; FG) probably serves for adherence of some pathogens. Conversely, it diminishes Shiga toxins susceptibility. The chain is Globoside alpha-1,3-N-acetylgalactosaminyltransferase 1 from Mus musculus (Mouse).